A 177-amino-acid chain; its full sequence is ATP-dependent protease subunit HslV (177 aa).

T6 is an active-site residue. Positions 161, 164, and 167 each coordinate Na(+).

The protein belongs to the peptidase T1B family. HslV subfamily. A double ring-shaped homohexamer of HslV is capped on each side by a ring-shaped HslU homohexamer. The assembly of the HslU/HslV complex is dependent on binding of ATP.

It is found in the cytoplasm. It catalyses the reaction ATP-dependent cleavage of peptide bonds with broad specificity.. Its activity is regulated as follows. Allosterically activated by HslU binding. Protease subunit of a proteasome-like degradation complex believed to be a general protein degrading machinery. This chain is ATP-dependent protease subunit HslV, found in Petrotoga mobilis (strain DSM 10674 / SJ95).